We begin with the raw amino-acid sequence, 420 residues long: Histidine--tRNA ligase (420 aa).

The protein belongs to the class-II aminoacyl-tRNA synthetase family. In terms of assembly, homodimer.

It localises to the cytoplasm. The catalysed reaction is tRNA(His) + L-histidine + ATP = L-histidyl-tRNA(His) + AMP + diphosphate + H(+). The sequence is that of Histidine--tRNA ligase from Ureaplasma parvum serovar 3 (strain ATCC 27815 / 27 / NCTC 11736).